The sequence spans 448 residues: Exodeoxyribonuclease 7 large subunit (448 aa).

The protein belongs to the XseA family. As to quaternary structure, heterooligomer composed of large and small subunits.

The protein localises to the cytoplasm. It catalyses the reaction Exonucleolytic cleavage in either 5'- to 3'- or 3'- to 5'-direction to yield nucleoside 5'-phosphates.. Bidirectionally degrades single-stranded DNA into large acid-insoluble oligonucleotides, which are then degraded further into small acid-soluble oligonucleotides. This is Exodeoxyribonuclease 7 large subunit from Enterococcus faecalis (strain ATCC 700802 / V583).